The sequence spans 51 residues: Large ribosomal subunit protein eL39 (51 aa).

Residues 1–23 form a disordered region; the sequence is MSALKKSFIKRKLAKKQKQNRPM. The span at 7–19 shows a compositional bias: basic residues; sequence SFIKRKLAKKQKQ.

It belongs to the eukaryotic ribosomal protein eL39 family. As to quaternary structure, interacts with impact.

The protein is Large ribosomal subunit protein eL39 (rpl-39) of Caenorhabditis elegans.